The chain runs to 404 residues: Cysteine desulfurase IscS (404 aa).

Pyridoxal 5'-phosphate-binding positions include 75–76 (AT), asparagine 155, glutamine 183, and 203–205 (SGH). N6-(pyridoxal phosphate)lysine is present on lysine 206. Residue threonine 243 participates in pyridoxal 5'-phosphate binding. The Cysteine persulfide intermediate role is filled by cysteine 328. Cysteine 328 serves as a coordination point for [2Fe-2S] cluster.

The protein belongs to the class-V pyridoxal-phosphate-dependent aminotransferase family. NifS/IscS subfamily. In terms of assembly, homodimer. Forms a heterotetramer with IscU, interacts with other sulfur acceptors. Pyridoxal 5'-phosphate serves as cofactor.

It localises to the cytoplasm. The enzyme catalyses (sulfur carrier)-H + L-cysteine = (sulfur carrier)-SH + L-alanine. Its pathway is cofactor biosynthesis; iron-sulfur cluster biosynthesis. In terms of biological role, master enzyme that delivers sulfur to a number of partners involved in Fe-S cluster assembly, tRNA modification or cofactor biosynthesis. Catalyzes the removal of elemental sulfur and selenium atoms from cysteine and selenocysteine to produce alanine. Functions as a sulfur delivery protein for Fe-S cluster synthesis onto IscU, an Fe-S scaffold assembly protein, as well as other S acceptor proteins. Also functions as a selenium delivery protein in the pathway for the biosynthesis of selenophosphate. The chain is Cysteine desulfurase IscS from Salmonella gallinarum (strain 287/91 / NCTC 13346).